Reading from the N-terminus, the 246-residue chain is 3-deoxy-manno-octulosonate cytidylyltransferase (246 aa).

This sequence belongs to the KdsB family.

The protein localises to the cytoplasm. The enzyme catalyses 3-deoxy-alpha-D-manno-oct-2-ulosonate + CTP = CMP-3-deoxy-beta-D-manno-octulosonate + diphosphate. The protein operates within nucleotide-sugar biosynthesis; CMP-3-deoxy-D-manno-octulosonate biosynthesis; CMP-3-deoxy-D-manno-octulosonate from 3-deoxy-D-manno-octulosonate and CTP: step 1/1. It functions in the pathway bacterial outer membrane biogenesis; lipopolysaccharide biosynthesis. Its function is as follows. Activates KDO (a required 8-carbon sugar) for incorporation into bacterial lipopolysaccharide in Gram-negative bacteria. This Rickettsia felis (strain ATCC VR-1525 / URRWXCal2) (Rickettsia azadi) protein is 3-deoxy-manno-octulosonate cytidylyltransferase.